A 234-amino-acid chain; its full sequence is Thiamine-phosphate synthase (234 aa).

4-amino-2-methyl-5-(diphosphooxymethyl)pyrimidine is bound by residues 52-56 and N84; that span reads QYRSK. Mg(2+)-binding residues include D85 and D104. Position 123 (S123) interacts with 4-amino-2-methyl-5-(diphosphooxymethyl)pyrimidine. 150 to 152 contacts 2-[(2R,5Z)-2-carboxy-4-methylthiazol-5(2H)-ylidene]ethyl phosphate; sequence SVT. K153 is a binding site for 4-amino-2-methyl-5-(diphosphooxymethyl)pyrimidine. Position 180 (G180) interacts with 2-[(2R,5Z)-2-carboxy-4-methylthiazol-5(2H)-ylidene]ethyl phosphate.

The protein belongs to the thiamine-phosphate synthase family. It depends on Mg(2+) as a cofactor.

The catalysed reaction is 2-[(2R,5Z)-2-carboxy-4-methylthiazol-5(2H)-ylidene]ethyl phosphate + 4-amino-2-methyl-5-(diphosphooxymethyl)pyrimidine + 2 H(+) = thiamine phosphate + CO2 + diphosphate. It carries out the reaction 2-(2-carboxy-4-methylthiazol-5-yl)ethyl phosphate + 4-amino-2-methyl-5-(diphosphooxymethyl)pyrimidine + 2 H(+) = thiamine phosphate + CO2 + diphosphate. The enzyme catalyses 4-methyl-5-(2-phosphooxyethyl)-thiazole + 4-amino-2-methyl-5-(diphosphooxymethyl)pyrimidine + H(+) = thiamine phosphate + diphosphate. Its pathway is cofactor biosynthesis; thiamine diphosphate biosynthesis; thiamine phosphate from 4-amino-2-methyl-5-diphosphomethylpyrimidine and 4-methyl-5-(2-phosphoethyl)-thiazole: step 1/1. In terms of biological role, condenses 4-methyl-5-(beta-hydroxyethyl)thiazole monophosphate (THZ-P) and 2-methyl-4-amino-5-hydroxymethyl pyrimidine pyrophosphate (HMP-PP) to form thiamine monophosphate (TMP). The polypeptide is Thiamine-phosphate synthase (Nitrosospira multiformis (strain ATCC 25196 / NCIMB 11849 / C 71)).